We begin with the raw amino-acid sequence, 557 residues long: DNA ligase (557 aa).

Residue Glu249 participates in ATP binding. Lys251 acts as the N6-AMP-lysine intermediate in catalysis. Residues Arg256, Arg271, Glu301, Phe340, Arg417, and Lys423 each coordinate ATP.

The protein belongs to the ATP-dependent DNA ligase family. Mg(2+) serves as cofactor.

The catalysed reaction is ATP + (deoxyribonucleotide)n-3'-hydroxyl + 5'-phospho-(deoxyribonucleotide)m = (deoxyribonucleotide)n+m + AMP + diphosphate.. Its function is as follows. DNA ligase that seals nicks in double-stranded DNA during DNA replication, DNA recombination and DNA repair. The polypeptide is DNA ligase (Methanothermobacter thermautotrophicus (Methanobacterium thermoformicicum)).